The primary structure comprises 145 residues: Large ribosomal subunit protein uL13 (145 aa).

Belongs to the universal ribosomal protein uL13 family. Part of the 50S ribosomal subunit.

This protein is one of the early assembly proteins of the 50S ribosomal subunit, although it is not seen to bind rRNA by itself. It is important during the early stages of 50S assembly. This Halobacterium salinarum (strain ATCC 700922 / JCM 11081 / NRC-1) (Halobacterium halobium) protein is Large ribosomal subunit protein uL13.